The sequence spans 170 residues: RNA pyrophosphohydrolase (170 aa).

A Nudix hydrolase domain is found at 6 to 150; sequence GFRPNVGIIL…KRDVYRRALR (145 aa). The Nudix box signature appears at 39–60; that stretch reads GGINAHESPEQALYRELHEEVG.

Belongs to the Nudix hydrolase family. RppH subfamily. The cofactor is a divalent metal cation.

In terms of biological role, accelerates the degradation of transcripts by removing pyrophosphate from the 5'-end of triphosphorylated RNA, leading to a more labile monophosphorylated state that can stimulate subsequent ribonuclease cleavage. The polypeptide is RNA pyrophosphohydrolase (Cellvibrio japonicus (strain Ueda107) (Pseudomonas fluorescens subsp. cellulosa)).